Here is a 364-residue protein sequence, read N- to C-terminus: N-acetyl-gamma-glutamyl-phosphate reductase (364 aa).

The active site involves Cys157.

This sequence belongs to the NAGSA dehydrogenase family. Type 1 subfamily.

It localises to the cytoplasm. It carries out the reaction N-acetyl-L-glutamate 5-semialdehyde + phosphate + NADP(+) = N-acetyl-L-glutamyl 5-phosphate + NADPH + H(+). The protein operates within amino-acid biosynthesis; L-arginine biosynthesis; N(2)-acetyl-L-ornithine from L-glutamate: step 3/4. In terms of biological role, catalyzes the NADPH-dependent reduction of N-acetyl-5-glutamyl phosphate to yield N-acetyl-L-glutamate 5-semialdehyde. This is N-acetyl-gamma-glutamyl-phosphate reductase from Bifidobacterium longum (strain NCC 2705).